The following is a 351-amino-acid chain: Uroporphyrinogen decarboxylase (351 aa).

Substrate-binding positions include 25 to 29 (RQAGR), Asp-74, Tyr-151, Ser-206, and His-325.

It belongs to the uroporphyrinogen decarboxylase family. Homodimer.

It localises to the cytoplasm. The enzyme catalyses uroporphyrinogen III + 4 H(+) = coproporphyrinogen III + 4 CO2. Its pathway is porphyrin-containing compound metabolism; protoporphyrin-IX biosynthesis; coproporphyrinogen-III from 5-aminolevulinate: step 4/4. Its function is as follows. Catalyzes the decarboxylation of four acetate groups of uroporphyrinogen-III to yield coproporphyrinogen-III. This Chlorobium phaeobacteroides (strain DSM 266 / SMG 266 / 2430) protein is Uroporphyrinogen decarboxylase.